Here is a 100-residue protein sequence, read N- to C-terminus: Small ribosomal subunit protein uS14c (100 aa).

Belongs to the universal ribosomal protein uS14 family. Part of the 30S ribosomal subunit.

It is found in the plastid. Its subcellular location is the chloroplast. In terms of biological role, binds 16S rRNA, required for the assembly of 30S particles. The chain is Small ribosomal subunit protein uS14c from Fagopyrum esculentum subsp. ancestrale (Wild buckwheat).